We begin with the raw amino-acid sequence, 378 residues long: Putative odorant receptor 71a (378 aa).

Residues 1–37 lie on the Cytoplasmic side of the membrane; sequence MDYDRIRPVRFLTGVLKWWRLWPRKESVSTPDWTNWQ. Residues 38–58 form a helical membrane-spanning segment; that stretch reads AYALHVPFTFLFVLLLWLEAI. Over 59–66 the chain is Extracellular; sequence KSRDIQHT. The helical transmembrane segment at 67 to 87 threads the bilayer; the sequence is ADVLLICLTTTALGGKVINIW. Topologically, residues 88–127 are cytoplasmic; it reads KYAHVAQGILSEWSTWDLFELRSKQEVDMWRFEHRRFNRV. A helical transmembrane segment spans residues 128–148; sequence FMFYCLCSAGVIPFIVIQPLF. The Extracellular portion of the chain corresponds to 149–166; it reads DIPNRLPFWMWTPFDWQQ. Residues 167–187 form a helical membrane-spanning segment; it reads PVLFWYAFIYQATTIPIACAC. The Cytoplasmic portion of the chain corresponds to 188–255; sequence NVTMDAVNWY…IFISKSTFTQ (68 aa). A helical transmembrane segment spans residues 256-276; sequence ILVSSLIICFTIYSMQMSPVL. The Extracellular portion of the chain corresponds to 277–280; that stretch reads QDLP. The chain crosses the membrane as a helical span at residues 281–301; it reads GFAAMMQYLVAMIMQVMLPTI. The Cytoplasmic segment spans residues 302 to 343; the sequence is YGNAVIDSANMLTDSMYNSDWPDMNCRMRRLVLMFMVYLNRP. Residues 344 to 364 traverse the membrane as a helical segment; the sequence is VTLKAGGFFHIGLPLFTKTMN. Topologically, residues 365 to 378 are extracellular; sequence QAYSLLALLLNMNQ.

This sequence belongs to the insect chemoreceptor superfamily. Heteromeric odorant receptor channel (TC 1.A.69) family. Or2a subfamily. Interacts with Orco. Complexes exist early in the endomembrane system in olfactory sensory neurons (OSNs), coupling these complexes to the conserved ciliary trafficking pathway. Expressed in olfactory sensory neurons in the maxillary palp.

Its subcellular location is the cell membrane. Odorant receptor which mediates acceptance or avoidance behavior, depending on its substrates. The odorant receptor repertoire encodes a large collection of odor stimuli that vary widely in identity, intensity, and duration. May form a complex with Orco to form odorant-sensing units, providing sensitive and prolonged odorant signaling and calcium permeability. This Drosophila melanogaster (Fruit fly) protein is Putative odorant receptor 71a (Or71a).